Consider the following 98-residue polypeptide: Trp operon repressor homolog (98 aa).

A DNA-binding region spans residues 59-82 (QRQVSQMLGVGVATITRGSNELKA).

This sequence belongs to the TrpR family. In terms of assembly, homodimer.

The protein resides in the cytoplasm. In terms of biological role, this protein is an aporepressor. When complexed with L-tryptophan it binds the operator region of the trp operon and prevents the initiation of transcription. This is Trp operon repressor homolog from Vibrio atlanticus (strain LGP32) (Vibrio splendidus (strain Mel32)).